Reading from the N-terminus, the 96-residue chain is ESAT-6-like protein EsxR (96 aa).

This sequence belongs to the WXG100 family. ESAT-6 subfamily.

The protein resides in the secreted. The chain is ESAT-6-like protein EsxR from Mycobacterium bovis (strain ATCC BAA-935 / AF2122/97).